The chain runs to 501 residues: Ribose import ATP-binding protein RbsA (501 aa).

2 consecutive ABC transporter domains span residues 6–242 (LQLS…VGRK) and 253–495 (VHGQ…VGKK). 38 to 45 (GENGAGKS) contributes to the ATP binding site.

The protein belongs to the ABC transporter superfamily. Ribose importer (TC 3.A.1.2.1) family. In terms of assembly, the complex is composed of an ATP-binding protein (RbsA), two transmembrane proteins (RbsC) and a solute-binding protein (RbsB).

The protein resides in the cell inner membrane. It carries out the reaction D-ribose(out) + ATP + H2O = D-ribose(in) + ADP + phosphate + H(+). Part of the ABC transporter complex RbsABC involved in ribose import. Responsible for energy coupling to the transport system. This chain is Ribose import ATP-binding protein RbsA, found in Vibrio vulnificus (strain CMCP6).